Reading from the N-terminus, the 504-residue chain is Ribosomal protein uS12 methylthiotransferase RimO (504 aa).

The region spanning K21–P131 is the MTTase N-terminal domain. C30, C66, C95, C186, C190, and C193 together coordinate [4Fe-4S] cluster. Residues L172–E408 form the Radical SAM core domain. The TRAM domain occupies S411–E487.

Belongs to the methylthiotransferase family. RimO subfamily. [4Fe-4S] cluster is required as a cofactor.

It localises to the cytoplasm. The catalysed reaction is L-aspartate(89)-[ribosomal protein uS12]-hydrogen + (sulfur carrier)-SH + AH2 + 2 S-adenosyl-L-methionine = 3-methylsulfanyl-L-aspartate(89)-[ribosomal protein uS12]-hydrogen + (sulfur carrier)-H + 5'-deoxyadenosine + L-methionine + A + S-adenosyl-L-homocysteine + 2 H(+). In terms of biological role, catalyzes the methylthiolation of an aspartic acid residue of ribosomal protein uS12. The sequence is that of Ribosomal protein uS12 methylthiotransferase RimO from Deinococcus radiodurans (strain ATCC 13939 / DSM 20539 / JCM 16871 / CCUG 27074 / LMG 4051 / NBRC 15346 / NCIMB 9279 / VKM B-1422 / R1).